A 49-amino-acid chain; its full sequence is Large ribosomal subunit protein bL33A (49 aa).

This sequence belongs to the bacterial ribosomal protein bL33 family.

This Mycoplasmopsis agalactiae (strain NCTC 10123 / CIP 59.7 / PG2) (Mycoplasma agalactiae) protein is Large ribosomal subunit protein bL33A.